Reading from the N-terminus, the 431-residue chain is MSQLPFIVGAPGKVIIFGEHAAVYGKPAIAAALSLRCYLLVSPSSDSNTIRLQFPDIKLDHSWNIKDLPWEEIKPYLTYDSANKPQIPSELVPEIVDKLSSFLNGFDNKMHYYACFCFLYLLMNLCDSKVSGMNFIVRSTLPIGAGLGSSASTSVCLSSALALMGGWINKPSLHENDKLDTADIPDLEFIDKWSLIGEKCFHGNPSGIDNAVATFGGAVMFQRTSTPEQPSIRTNMRNFPAIKLLLTNTKVPKSTADLVAGVGRLNAEFNSISTSILTAIEHLSQEAYKVMMNPMFGREETNVLRKLVNINHGLLVALGVSHPALETVKIIGDKHRIGATKLTGAGGGGCAITLVNDDVEESVIHNAIKEFEDSGYESFETSLGGKGVGILFHEDLDDATKFSESQFCNYVDRAAIEDSLGMANVKEWKFW.

Residues Lys-13, Ser-139, and 144 to 150 contribute to the ATP site; that span reads GAGLGSS. Ser-150 and Glu-198 together coordinate Mg(2+). The Proton acceptor role is filled by Asp-209.

The protein belongs to the GHMP kinase family. Mevalonate kinase subfamily. Homodimer.

Its subcellular location is the cytoplasm. The protein localises to the cytosol. It carries out the reaction (R)-mevalonate + ATP = (R)-5-phosphomevalonate + ADP + H(+). Its pathway is isoprenoid biosynthesis; isopentenyl diphosphate biosynthesis via mevalonate pathway; isopentenyl diphosphate from (R)-mevalonate: step 1/3. Functionally, mevalonate kinase; part of the second module of ergosterol biosynthesis pathway that includes the middle steps of the pathway. ERG12 converts mevalonate into 5-phosphomevalonate. The second module is carried out in the vacuole and involves the formation of farnesyl diphosphate, which is also an important intermediate in the biosynthesis of ubiquinone, dolichol, heme and prenylated proteins. Activity by the mevalonate kinase ERG12 first converts mevalonate into 5-phosphomevalonate. 5-phosphomevalonate is then further converted to 5-diphosphomevalonate by the phosphomevalonate kinase ERG8. The diphosphomevalonate decarboxylase MVD then produces isopentenyl diphosphate. The isopentenyl-diphosphate delta-isomerase IDI1 then catalyzes the 1,3-allylic rearrangement of the homoallylic substrate isopentenyl (IPP) to its highly electrophilic allylic isomer, dimethylallyl diphosphate (DMAPP). Finally the farnesyl diphosphate synthase ERG20 catalyzes the sequential condensation of isopentenyl pyrophosphate with dimethylallyl pyrophosphate, and then with the resultant geranylpyrophosphate to the ultimate product farnesyl pyrophosphate. This chain is Mevalonate kinase, found in Candida albicans (strain SC5314 / ATCC MYA-2876) (Yeast).